The sequence spans 318 residues: MNSKCHCVKLNDGHFIPVLGFGTAMPSELPKSKAKEVTKIAIDAGFHHFDSAFVYNTEDHVGEAIREKIANGTTRREDIFYTSKLWCTSLHPELVRSSLECSLKKLQLDYVDLYLIHFPMALKPGDENFPVDEHGKLLFDTVDLCATWEAMEKCKDAGLAKSIGVSNFNRRQLEKILNKPGLKYKPVCNQVECHLYLNQMKLLDFCKTNGIILVAYGVLGTQRYNGWVDQNSPVLLNEPVLSSMAKKYNQTPALIALRHQLQRGIVVLNTSLKEERIKENMKLSPEDMKVLDDLNRNLRYIAGGIFEGHPNFPFLDEY.

20 to 24 serves as a coordination point for NADP(+); that stretch reads GFGTA. K31 is a binding site for substrate. D50 is a binding site for NADP(+). Catalysis depends on Y55, which acts as the Proton donor. H117 contributes to the substrate binding site. NADP(+) contacts are provided by residues 166–167, Q190, 216–224, and 270–280; these read SN, YGVLGTQRY, and TSLKEERIKEN.

The protein belongs to the aldo/keto reductase family. In terms of assembly, monomer.

The protein resides in the cytoplasm. The enzyme catalyses androsterone + NADP(+) = 5alpha-androstan-3,17-dione + NADPH + H(+). It carries out the reaction androsterone + NAD(+) = 5alpha-androstan-3,17-dione + NADH + H(+). Its function is as follows. NADP-dependent 17-alpha-hydroxysteroid dehydrogenase that converts 5-alpha-androstane-3,17-dione into androsterone. Has lower 3-alpha-hydroxysteroid dehydrogenase activity. Has broad substrate specificity and acts on various 17-alpha-hydroxysteroids, 17-ketosteroids, 3-alpha hydroxysteroids and 3-ketosteroids. Reduction of keto groups is strictly stereoselective. Reduction of 17-ketosteroids yields only 17-alpha-hydroxysteroids. Likewise, reduction of 3-ketosteroids yields only 3-alpha-hydroxysteroids. This Rattus norvegicus (Rat) protein is Aldo-keto reductase family 1 member C21 (Akr1c21).